Reading from the N-terminus, the 93-residue chain is Antitoxin RelF (93 aa).

This sequence belongs to the phD/YefM antitoxin family. As to quaternary structure, interacts with toxin RelG, which neutralizes the toxin. Also interacts with toxins RelE and RelK in vitro, in M.smegmatis coexpression with non-cognate toxins increases the toxicity of RelE but not of RelK.

Antitoxin component of a type II toxin-antitoxin (TA) system. Upon expression in M.smegmatis neutralizes the effect of toxin RelE2. In terms of biological role, induces its own promoter, in combination with RelG represses its own promoter. Has been seen to bind DNA in complex with toxin RelG but not alone. The protein is Antitoxin RelF (relF) of Mycobacterium tuberculosis (strain ATCC 25618 / H37Rv).